The sequence spans 689 residues: MTRKQRALFEPALVRTALIDALKKLDPRTQWRNPVMFVVYIGSILTTAIWLAILAKQTDGSAAFTGSIAMWLWFTVLFANFAEALAEGRSKAQAESLRGTKKTSWAKKLAGPRREGATEKVSAESLRKGDVVLVEAGDTIPCDGEVLEGGASVDESAITGESAPVIRESGGDFSSVTGGTRVLSDWLVVQCSVNPGETFLDRMIAMVEGAKRRKTPNEVALTILLVALTLVFVLATATLFPFSQYSVDAANGGSVVSITVLVALLVCLIPTTIGGLLSAIGVAGMSRMLGANVIATSGRAVEAAGDVDVLLLDKTGTITLGNRQASEFLPAPGVKEQELADAAQLSSLADETPEGRSIVVLAKQRFNLRERDLQALNATFVPFSAQTRMSGVNVQDRMIRKGAVDAIRRHVESNQGHFPQAVDDLVASVARTGGTPLVVAEGPRVLGVVALKDIVKGGIKERFVELRKMGIKTVMITGDNPLTAAAIAAEAGVDDFLSEATPEAKLALIRQYQAEGRLVAMTGDGTNDAPALAQADVAVAMNSGTQAAKEAGNMVDLDSNPTKLIEVVHIGKQMLMTRGSLTTFSIANDVAKYFAIIPAAFAATYPQLNALNVMHLHSPASAIMSAVIFNALVIVFLIPLALKGVSYKPMSAAALLRRNLWLYGVGGLLVPFVGIKLIDLLLVALHIAG.

A run of 4 helical transmembrane segments spans residues 35 to 55 (VMFV…AILA), 62 to 82 (AAFT…ANFA), 220 to 240 (ALTI…ATLF), and 260 to 280 (VLVA…LSAI). Asp313 functions as the 4-aspartylphosphate intermediate in the catalytic mechanism. Residues Asp350, Glu354, 383–390 (FSAQTRMS), and Lys401 contribute to the ATP site. Residues Asp524 and Asp528 each contribute to the Mg(2+) site. 3 helical membrane-spanning segments follow: residues 594-614 (FAII…LNVM), 622-642 (AIMS…PLAL), and 665-685 (VGGL…LVAL).

It belongs to the cation transport ATPase (P-type) (TC 3.A.3) family. Type IA subfamily. As to quaternary structure, the system is composed of three essential subunits: KdpA, KdpB and KdpC.

It localises to the cell inner membrane. It carries out the reaction K(+)(out) + ATP + H2O = K(+)(in) + ADP + phosphate + H(+). Functionally, part of the high-affinity ATP-driven potassium transport (or Kdp) system, which catalyzes the hydrolysis of ATP coupled with the electrogenic transport of potassium into the cytoplasm. This subunit is responsible for energy coupling to the transport system and for the release of the potassium ions to the cytoplasm. This is Potassium-transporting ATPase ATP-binding subunit from Serratia proteamaculans (strain 568).